The following is a 284-amino-acid chain: Fructosamine kinase FrlD (284 aa).

The protein belongs to the carbohydrate kinase PfkB family.

Functionally, catalyzes the phosphorylation of a range of fructosamines to fructosamine 6-phosphates. The chain is Fructosamine kinase FrlD (frlD) from Bacillus subtilis (strain 168).